The primary structure comprises 475 residues: ATP synthase subunit beta, chloroplastic (475 aa).

ATP is bound at residue Gly155–Thr162.

The protein belongs to the ATPase alpha/beta chains family. As to quaternary structure, F-type ATPases have 2 components, CF(1) - the catalytic core - and CF(0) - the membrane proton channel. CF(1) has five subunits: alpha(3), beta(3), gamma(1), delta(1), epsilon(1). CF(0) has four main subunits: a(1), b(1), b'(1) and c(9-12).

The protein localises to the plastid. The protein resides in the chloroplast thylakoid membrane. The catalysed reaction is ATP + H2O + 4 H(+)(in) = ADP + phosphate + 5 H(+)(out). Functionally, produces ATP from ADP in the presence of a proton gradient across the membrane. The catalytic sites are hosted primarily by the beta subunits. This Ochrosphaera neapolitana protein is ATP synthase subunit beta, chloroplastic.